The primary structure comprises 481 residues: NADH-quinone oxidoreductase subunit N (481 aa).

Transmembrane regions (helical) follow at residues 11–31 (ALPEVALLSLLVLLLPADLWA), 38–58 (WTHYGALATVAVTAAVQLAVW), 74–94 (GMSRLAKMVLYALTFVLFVYA), 103–123 (IFKGEFYTLSLFALLGMSVMV), 128–148 (FLTAYIGLELLSLALYALIAL), 163–183 (FVLGALASGLLLYGISMVYGA), 208–228 (LGLVFIVVAVAFKLGAVPFHM), 241–261 (VTALVGTAPKIAAVVFAFRIL), 272–292 (WSLMFALLAAASLLVGNLAAI), 300–322 (MLAYSTVSHMGFILLAFMAGAVG), 332–352 (TYALMAAAGFGVLMVLSDGDN), 368–388 (VWLAFLMLLVMFSMAGIPPLM), 404–424 (GYVWLSVFAVVMSLVGAFYYL), and 450–470 (SLLSVNALLLVLWGIMPQTVI).

Belongs to the complex I subunit 2 family. In terms of assembly, NDH-1 is composed of 14 different subunits. Subunits NuoA, H, J, K, L, M, N constitute the membrane sector of the complex.

The protein resides in the cell inner membrane. The enzyme catalyses a quinone + NADH + 5 H(+)(in) = a quinol + NAD(+) + 4 H(+)(out). Its function is as follows. NDH-1 shuttles electrons from NADH, via FMN and iron-sulfur (Fe-S) centers, to quinones in the respiratory chain. The immediate electron acceptor for the enzyme in this species is believed to be ubiquinone. Couples the redox reaction to proton translocation (for every two electrons transferred, four hydrogen ions are translocated across the cytoplasmic membrane), and thus conserves the redox energy in a proton gradient. The protein is NADH-quinone oxidoreductase subunit N of Neisseria gonorrhoeae (strain ATCC 700825 / FA 1090).